The sequence spans 229 residues: DNA mismatch repair protein MutH (229 aa).

Belongs to the MutH family.

The protein localises to the cytoplasm. Functionally, sequence-specific endonuclease that cleaves unmethylated GATC sequences. It is involved in DNA mismatch repair. In Escherichia coli O17:K52:H18 (strain UMN026 / ExPEC), this protein is DNA mismatch repair protein MutH.